The chain runs to 201 residues: Ran-specific GTPase-activating protein (201 aa).

Over residues 1-26 the composition is skewed to basic and acidic residues; it reads MAAAKDTHEDHDTSTENTDESNHDPQ. The disordered stretch occupies residues 1–35; it reads MAAAKDTHEDHDTSTENTDESNHDPQFEPIVSLPE. The residue at position 2 (alanine 2) is an N-acetylalanine. Phosphothreonine is present on residues threonine 13 and threonine 18. A phosphoserine mark is found at serine 21 and serine 60. Positions 26–164 constitute a RanBD1 domain; the sequence is QFEPIVSLPE…FEECRKEIEE (139 aa). N6-acetyllysine; alternate is present on lysine 150. Residue lysine 150 is modified to N6-succinyllysine; alternate. The interval 163–201 is disordered; the sequence is EEREKKAGSGKNDHAEKVAEKLEALSVKEETKEDAEEKQ. Lysine 183 carries the N6-acetyllysine modification. Serine 188 is subject to Phosphoserine. A Glycyl lysine isopeptide (Lys-Gly) (interchain with G-Cter in SUMO2) cross-link involves residue lysine 190.

It belongs to the RANBP1 family. In terms of assembly, interacts with RAN (via C-terminus of GTP-bound form) but not with GDP-bound RAN. Identified in a complex composed of RAN, RANGAP1 and RANBP1. Identified in a complex that contains TNPO1, RAN and RANBP1. Identified in a complex that contains CSE1L, KPNA2, RAN and RANBP1. Identified in a complex with nucleotide-free RAN and RCC1.

In terms of biological role, plays a role in RAN-dependent nucleocytoplasmic transport. Alleviates the TNPO1-dependent inhibition of RAN GTPase activity and mediates the dissociation of RAN from proteins involved in transport into the nucleus. Induces a conformation change in the complex formed by XPO1 and RAN that triggers the release of the nuclear export signal of cargo proteins. Promotes the disassembly of the complex formed by RAN and importin beta. Promotes dissociation of RAN from a complex with KPNA2 and CSE1L. Required for normal mitotic spindle assembly and normal progress through mitosis via its effect on RAN. Does not increase the RAN GTPase activity by itself, but increases GTP hydrolysis mediated by RANGAP1. Inhibits RCC1-dependent exchange of RAN-bound GDP by GTP. This chain is Ran-specific GTPase-activating protein (RANBP1), found in Homo sapiens (Human).